A 946-amino-acid polypeptide reads, in one-letter code: DNA ligase 4 (946 aa).

9 residues coordinate ATP: glutamate 295, lysine 297, arginine 302, glutamate 355, phenylalanine 397, glutamate 457, lysine 462, lysine 479, and lysine 481. The active-site N6-AMP-lysine intermediate is lysine 297. Glutamate 355 provides a ligand contact to Mg(2+). Glutamate 457 contributes to the Mg(2+) binding site. 2 BRCT domains span residues 688–787 (HRSD…PSHC) and 845–945 (VPHF…NYRL).

The protein belongs to the ATP-dependent DNA ligase family. Mg(2+) is required as a cofactor.

The protein localises to the nucleus. The catalysed reaction is ATP + (deoxyribonucleotide)n-3'-hydroxyl + 5'-phospho-(deoxyribonucleotide)m = (deoxyribonucleotide)n+m + AMP + diphosphate.. DNA ligase involved in DNA non-homologous end joining (NHEJ); required for double-strand break (DSB) repair. In Candida glabrata (strain ATCC 2001 / BCRC 20586 / JCM 3761 / NBRC 0622 / NRRL Y-65 / CBS 138) (Yeast), this protein is DNA ligase 4 (LIG4).